The primary structure comprises 198 residues: Na(+)-translocating NADH-quinone reductase subunit E (198 aa).

The next 6 helical transmembrane spans lie at 11 to 31, 39 to 59, 77 to 97, 110 to 130, 140 to 160, and 176 to 196; these read SIFIENLALSFFLGMCTFLAV, MGLGIAVIVVQTVAVPANNLI, FLSFITFIGVIAALVQILEMA, GIFLPLITVNCAIFGGVSFMV, VVYGVGSGAGWMLAIVAMAGI, and LGITFITAGLMALGFMSFSGI.

Belongs to the NqrDE/RnfAE family. As to quaternary structure, composed of six subunits; NqrA, NqrB, NqrC, NqrD, NqrE and NqrF.

The protein resides in the cell inner membrane. It carries out the reaction a ubiquinone + n Na(+)(in) + NADH + H(+) = a ubiquinol + n Na(+)(out) + NAD(+). In terms of biological role, NQR complex catalyzes the reduction of ubiquinone-1 to ubiquinol by two successive reactions, coupled with the transport of Na(+) ions from the cytoplasm to the periplasm. NqrA to NqrE are probably involved in the second step, the conversion of ubisemiquinone to ubiquinol. This is Na(+)-translocating NADH-quinone reductase subunit E from Aeromonas salmonicida (strain A449).